The sequence spans 295 residues: Ethanolamine ammonia-lyase small subunit (295 aa).

Residues V207, E228, and C258 each coordinate adenosylcob(III)alamin.

Belongs to the EutC family. As to quaternary structure, the basic unit is a heterodimer which dimerizes to form tetramers. The heterotetramers trimerize; 6 large subunits form a core ring with 6 small subunits projecting outwards. The cofactor is adenosylcob(III)alamin.

It localises to the bacterial microcompartment. The enzyme catalyses ethanolamine = acetaldehyde + NH4(+). It participates in amine and polyamine degradation; ethanolamine degradation. Its function is as follows. Catalyzes the deamination of various vicinal amino-alcohols to oxo compounds. Allows this organism to utilize ethanolamine as the sole source of nitrogen and carbon in the presence of external vitamin B12. The sequence is that of Ethanolamine ammonia-lyase small subunit from Escherichia coli O157:H7.